A 349-amino-acid polypeptide reads, in one-letter code: Phenylalanine--tRNA ligase alpha subunit (349 aa).

Glu258 contacts Mg(2+).

Belongs to the class-II aminoacyl-tRNA synthetase family. Phe-tRNA synthetase alpha subunit type 1 subfamily. In terms of assembly, tetramer of two alpha and two beta subunits. It depends on Mg(2+) as a cofactor.

It localises to the cytoplasm. The enzyme catalyses tRNA(Phe) + L-phenylalanine + ATP = L-phenylalanyl-tRNA(Phe) + AMP + diphosphate + H(+). This chain is Phenylalanine--tRNA ligase alpha subunit, found in Rickettsia felis (strain ATCC VR-1525 / URRWXCal2) (Rickettsia azadi).